The primary structure comprises 145 residues: Ribonuclease H (145 aa).

One can recognise an RNase H type-1 domain in the interval 1–142; it reads MKEVVIYTDG…CDEIARSMIK (142 aa). 4 residues coordinate Mg(2+): Asp-9, Glu-47, Asp-69, and Asp-134.

It belongs to the RNase H family. As to quaternary structure, monomer. Requires Mg(2+) as cofactor.

The protein localises to the cytoplasm. It catalyses the reaction Endonucleolytic cleavage to 5'-phosphomonoester.. Functionally, endonuclease that specifically degrades the RNA of RNA-DNA hybrids. In Caldicellulosiruptor saccharolyticus (strain ATCC 43494 / DSM 8903 / Tp8T 6331), this protein is Ribonuclease H.